The sequence spans 276 residues: Light-independent protochlorophyllide reductase iron-sulfur ATP-binding protein (276 aa).

ATP-binding positions include 12–17 (GIGKST) and lysine 41. Serine 16 is a binding site for Mg(2+). Residues cysteine 97 and cysteine 131 each coordinate [4Fe-4S] cluster. 182–183 (NR) lines the ATP pocket.

Belongs to the NifH/BchL/ChlL family. In terms of assembly, homodimer. Protochlorophyllide reductase is composed of three subunits; BchL, BchN and BchB. [4Fe-4S] cluster is required as a cofactor.

The catalysed reaction is chlorophyllide a + oxidized 2[4Fe-4S]-[ferredoxin] + 2 ADP + 2 phosphate = protochlorophyllide a + reduced 2[4Fe-4S]-[ferredoxin] + 2 ATP + 2 H2O. Its pathway is porphyrin-containing compound metabolism; bacteriochlorophyll biosynthesis (light-independent). Its function is as follows. Component of the dark-operative protochlorophyllide reductase (DPOR) that uses Mg-ATP and reduced ferredoxin to reduce ring D of protochlorophyllide (Pchlide) to form chlorophyllide a (Chlide). This reaction is light-independent. The L component serves as a unique electron donor to the NB-component of the complex, and binds Mg-ATP. This is Light-independent protochlorophyllide reductase iron-sulfur ATP-binding protein from Chlorobaculum tepidum (strain ATCC 49652 / DSM 12025 / NBRC 103806 / TLS) (Chlorobium tepidum).